Consider the following 549-residue polypeptide: MKRVLTALAATLPFAANAADAISGAVERQPTNWQAIIMFLIFVVFTLGITYWASKRVRSRNDYYTAGGNITGFQNGLAIAGDYMSAASFLGISALVFTSGYDGLIYSLGFLVGWPIILFLIAERLRNLGRYTFADVASYRLKQGPIRILSACGSLVVVALYLIAQMVGAGKLIELLFGLNYHIAVVLVGVLMMMYVLFGGMLATTWVQIIKAVLLLFGASFMAFMVMKHVGFSFNNLFSEAMAVHPKGVDIMKPGGLVKDPISALSLGLGLMFGTAGLPHILMRFFTVSDAREARKSVFYATGFMGYFYILTFIIGFGAIMLVGANPEYKDAAGHLIGGNNMAAVHLANAVGGNLFLGFISAVAFATILAVVAGLTLAGASAVSHDLYANVFKKGATEREELRVSKITVLILGVIAIILGVLFENQNIAFMVGLAFAIAASCNFPIILLSMYWSKLTTRGAMLGGWLGLITAVVLMILGPTIWVQILGHEKAIFPYEYPALFSISVAFLGIWLFSATDNSAEGARERELFRAQFIRSQTGFGVEQGRAH.

Transmembrane regions (helical) follow at residues 33–53 (WQAI…TYWA), 77–97 (LAIA…ALVF), 103–123 (GLIY…LIAE), 148–168 (ILSA…QMVG), 183–203 (IAVV…GMLA), 206–226 (WVQI…AFMV), 262–282 (ISAL…PHIL), 303–323 (GFMG…IMLV), 355–375 (LFLG…VAGL), 404–424 (VSKI…VLFE), 428–448 (IAFM…PIIL), 464–484 (GGWL…TIWV), and 493–513 (IFPY…GIWL).

The protein belongs to the sodium:solute symporter (SSF) (TC 2.A.21) family.

The protein resides in the cell inner membrane. Functionally, transports acetate. This chain is Cation/acetate symporter ActP, found in Escherichia coli O1:K1 / APEC.